Consider the following 124-residue polypeptide: Small ribosomal subunit protein uS12c (124 aa).

This sequence belongs to the universal ribosomal protein uS12 family. In terms of assembly, part of the 30S ribosomal subunit.

It is found in the plastid. The protein localises to the chloroplast. Its function is as follows. With S4 and S5 plays an important role in translational accuracy. Located at the interface of the 30S and 50S subunits. The polypeptide is Small ribosomal subunit protein uS12c (rps12) (Ostreococcus tauri).